Consider the following 693-residue polypeptide: DNA ligase (693 aa).

Residues 35–39 (DAEYD), 84–85 (SI), and Glu-121 contribute to the NAD(+) site. Lys-123 functions as the N6-AMP-lysine intermediate in the catalytic mechanism. Positions 144, 180, 297, and 321 each coordinate NAD(+). Residues Cys-418, Cys-421, Cys-436, and Cys-442 each contribute to the Zn(2+) site. Residues 601-690 (PASGSVAGLT…EQSPINNKDG (90 aa)) enclose the BRCT domain.

It belongs to the NAD-dependent DNA ligase family. LigA subfamily. It depends on Mg(2+) as a cofactor. Requires Mn(2+) as cofactor.

It catalyses the reaction NAD(+) + (deoxyribonucleotide)n-3'-hydroxyl + 5'-phospho-(deoxyribonucleotide)m = (deoxyribonucleotide)n+m + AMP + beta-nicotinamide D-nucleotide.. DNA ligase that catalyzes the formation of phosphodiester linkages between 5'-phosphoryl and 3'-hydroxyl groups in double-stranded DNA using NAD as a coenzyme and as the energy source for the reaction. It is essential for DNA replication and repair of damaged DNA. The polypeptide is DNA ligase (Azoarcus sp. (strain BH72)).